We begin with the raw amino-acid sequence, 64 residues long: Cytochrome c oxidase subunit 2 (64 aa).

The Mitochondrial intermembrane segment spans residues 1–14 (MAHPSQLGFQDAAS). The helical transmembrane segment at 15–45 (PMMEELLHFHDHALMVVFLISTFVLYIILTM) threads the bilayer. Residues 46-64 (LTTKLTDKLILESHEIEII) lie on the Mitochondrial matrix side of the membrane.

The protein belongs to the cytochrome c oxidase subunit 2 family. As to quaternary structure, component of the cytochrome c oxidase (complex IV, CIV), a multisubunit enzyme composed of 14 subunits. The complex is composed of a catalytic core of 3 subunits MT-CO1, MT-CO2 and MT-CO3, encoded in the mitochondrial DNA, and 11 supernumerary subunits COX4I, COX5A, COX5B, COX6A, COX6B, COX6C, COX7A, COX7B, COX7C, COX8 and NDUFA4, which are encoded in the nuclear genome. The complex exists as a monomer or a dimer and forms supercomplexes (SCs) in the inner mitochondrial membrane with NADH-ubiquinone oxidoreductase (complex I, CI) and ubiquinol-cytochrome c oxidoreductase (cytochrome b-c1 complex, complex III, CIII), resulting in different assemblies (supercomplex SCI(1)III(2)IV(1) and megacomplex MCI(2)III(2)IV(2)). Found in a complex with TMEM177, COA6, COX18, COX20, SCO1 and SCO2. Interacts with TMEM177 in a COX20-dependent manner. Interacts with COX20. Interacts with COX16. Cu cation is required as a cofactor.

It is found in the mitochondrion inner membrane. The enzyme catalyses 4 Fe(II)-[cytochrome c] + O2 + 8 H(+)(in) = 4 Fe(III)-[cytochrome c] + 2 H2O + 4 H(+)(out). Component of the cytochrome c oxidase, the last enzyme in the mitochondrial electron transport chain which drives oxidative phosphorylation. The respiratory chain contains 3 multisubunit complexes succinate dehydrogenase (complex II, CII), ubiquinol-cytochrome c oxidoreductase (cytochrome b-c1 complex, complex III, CIII) and cytochrome c oxidase (complex IV, CIV), that cooperate to transfer electrons derived from NADH and succinate to molecular oxygen, creating an electrochemical gradient over the inner membrane that drives transmembrane transport and the ATP synthase. Cytochrome c oxidase is the component of the respiratory chain that catalyzes the reduction of oxygen to water. Electrons originating from reduced cytochrome c in the intermembrane space (IMS) are transferred via the dinuclear copper A center (CU(A)) of subunit 2 and heme A of subunit 1 to the active site in subunit 1, a binuclear center (BNC) formed by heme A3 and copper B (CU(B)). The BNC reduces molecular oxygen to 2 water molecules using 4 electrons from cytochrome c in the IMS and 4 protons from the mitochondrial matrix. This Geophagus steindachneri (Red hump earth eater) protein is Cytochrome c oxidase subunit 2 (mt-co2).